Here is a 176-residue protein sequence, read N- to C-terminus: Oligoribonuclease (176 aa).

The Exonuclease domain occupies 2–159; sequence EMTGLNPETD…DDILESIEEM (158 aa). The active site involves Tyr117.

Belongs to the oligoribonuclease family.

The protein localises to the cytoplasm. In terms of biological role, 3'-to-5' exoribonuclease specific for small oligoribonucleotides. This chain is Oligoribonuclease, found in Neisseria gonorrhoeae (strain ATCC 700825 / FA 1090).